The chain runs to 196 residues: Imidazoleglycerol-phosphate dehydratase (196 aa).

The protein belongs to the imidazoleglycerol-phosphate dehydratase family.

The protein localises to the cytoplasm. It carries out the reaction D-erythro-1-(imidazol-4-yl)glycerol 3-phosphate = 3-(imidazol-4-yl)-2-oxopropyl phosphate + H2O. It participates in amino-acid biosynthesis; L-histidine biosynthesis; L-histidine from 5-phospho-alpha-D-ribose 1-diphosphate: step 6/9. This Phenylobacterium zucineum (strain HLK1) protein is Imidazoleglycerol-phosphate dehydratase.